A 115-amino-acid polypeptide reads, in one-letter code: MPMFIVNTNVPRASVPEGFLSELTQQLAQATGKPAQYIAVHVVPDQLMTFSGTNDPCALCSLHSIGKIGGAQNRNYSKLLCGLLSDRLHISPDRVYINYYDMNAANVGWNGSTFA.

The active-site Proton acceptor; via imino nitrogen is Pro-2. Positions 33 and 65 each coordinate substrate. At Lys-78 the chain carries N6-acetyllysine; alternate. Position 78 is an N6-succinyllysine; alternate (Lys-78). A substrate-binding site is contributed by Asn-98.

The protein belongs to the MIF family. Homotrimer. Interacts with CD74 and CXCR2 extracellular domain and COPS5. Interacts with the USO1 and BNIPL.

It localises to the secreted. The protein resides in the cytoplasm. The enzyme catalyses 3-phenylpyruvate = enol-phenylpyruvate. It catalyses the reaction L-dopachrome = 5,6-dihydroxyindole-2-carboxylate. Functionally, pro-inflammatory cytokine involved in the innate immune response to bacterial pathogens. The expression of MIF at sites of inflammation suggests a role as mediator in regulating the function of macrophages in host defense. Counteracts the anti-inflammatory activity of glucocorticoids. Has phenylpyruvate tautomerase and dopachrome tautomerase activity (in vitro), but the physiological substrate is not known. It is not clear whether the tautomerase activity has any physiological relevance, and whether it is important for cytokine activity. This chain is Macrophage migration inhibitory factor, found in Mus musculus (Mouse).